The chain runs to 277 residues: 2,5-diketo-D-gluconic acid reductase B (277 aa).

Catalysis depends on Tyr-51, which acts as the Proton donor. His-109 is a binding site for substrate. NADP(+) is bound at residue 189–242; sequence SPLARRSELLTEQLLQELAVVYGVTPTQVVLRWHVQLGSTPIPKSADPDRQREN.

It belongs to the aldo/keto reductase family.

The protein resides in the cytoplasm. It carries out the reaction 2-dehydro-D-gluconate + NADP(+) = 2,5-didehydro-D-gluconate + NADPH + H(+). Functionally, catalyzes the reduction of 2,5-diketo-D-gluconic acid (25DKG) to 2-keto-L-gulonic acid (2KLG). 25DKGR-B has higher catalytic efficiency than 25DKGR-A. In Corynebacterium sp. (strain SHS752001), this protein is 2,5-diketo-D-gluconic acid reductase B (dkgB).